We begin with the raw amino-acid sequence, 222 residues long: ATP synthase F(0) complex subunit a (222 aa).

6 consecutive transmembrane segments (helical) span residues 8–28, 64–84, 93–113, 127–147, 160–180, and 197–219; these read FFYV…ILLP, WSLM…LGLL, QLTV…VPGF, QGTP…SLLI, ITAG…LSSI, and ILEL…LYLH.

The protein belongs to the ATPase A chain family. Component of the ATP synthase complex composed at least of ATP5F1A/subunit alpha, ATP5F1B/subunit beta, ATP5MC1/subunit c (homooctomer), MT-ATP6/subunit a, MT-ATP8/subunit 8, ATP5ME/subunit e, ATP5MF/subunit f, ATP5MG/subunit g, ATP5MK/subunit k, ATP5MJ/subunit j, ATP5F1C/subunit gamma, ATP5F1D/subunit delta, ATP5F1E/subunit epsilon, ATP5PF/subunit F6, ATP5PB/subunit b, ATP5PD/subunit d, ATP5PO/subunit OSCP. ATP synthase complex consists of a soluble F(1) head domain (subunits alpha(3) and beta(3)) - the catalytic core - and a membrane F(0) domain - the membrane proton channel (subunits c, a, 8, e, f, g, k and j). These two domains are linked by a central stalk (subunits gamma, delta, and epsilon) rotating inside the F1 region and a stationary peripheral stalk (subunits F6, b, d, and OSCP). Interacts with DNAJC30; interaction is direct.

The protein localises to the mitochondrion inner membrane. It catalyses the reaction H(+)(in) = H(+)(out). Its function is as follows. Subunit a, of the mitochondrial membrane ATP synthase complex (F(1)F(0) ATP synthase or Complex V) that produces ATP from ADP in the presence of a proton gradient across the membrane which is generated by electron transport complexes of the respiratory chain. ATP synthase complex consist of a soluble F(1) head domain - the catalytic core - and a membrane F(1) domain - the membrane proton channel. These two domains are linked by a central stalk rotating inside the F(1) region and a stationary peripheral stalk. During catalysis, ATP synthesis in the catalytic domain of F(1) is coupled via a rotary mechanism of the central stalk subunits to proton translocation. With the subunit c (ATP5MC1), forms the proton-conducting channel in the F(0) domain, that contains two crucial half-channels (inlet and outlet) that facilitate proton movement from the mitochondrial intermembrane space (IMS) into the matrix. Protons are taken up via the inlet half-channel and released through the outlet half-channel, following a Grotthuss mechanism. This chain is ATP synthase F(0) complex subunit a, found in Loxodonta africana (African elephant).